Here is a 704-residue protein sequence, read N- to C-terminus: Non-sulfated chondroitin lyase E66 (704 aa).

The signal sequence occupies residues 1 to 23 (MSIVLIIVIVVIFLICFLYLSNS). Active-site proton acceptor residues include Asn-236 and His-291. Tyr-299 (proton donor) is an active-site residue.

Belongs to the baculoviridae E66 family.

It is found in the virion membrane. The protein resides in the host nucleus. It localises to the host cytoplasm. In terms of biological role, component of the polyhedra envelope. Plays an essential role in oral infectivity. May digest, with its chondroitin lyase activity, the chondroitin sulfate barrier of the peritrophic matrix of the host midgut to facilitate viral infection in the epithelial cells. The chain is Non-sulfated chondroitin lyase E66 (P79) from Lepidoptera (butterflies and moths).